Consider the following 311-residue polypeptide: Probable cell division protein WhiA (311 aa).

Positions T277–E311 form a DNA-binding region, H-T-H motif.

This sequence belongs to the WhiA family.

Its function is as follows. Involved in cell division and chromosome segregation. The polypeptide is Probable cell division protein WhiA (Lactobacillus helveticus (strain DPC 4571)).